A 72-amino-acid polypeptide reads, in one-letter code: Large ribosomal subunit protein bL31 (72 aa).

Positions 17, 19, 37, and 40 each coordinate Zn(2+).

The protein belongs to the bacterial ribosomal protein bL31 family. Type A subfamily. As to quaternary structure, part of the 50S ribosomal subunit. The cofactor is Zn(2+).

Functionally, binds the 23S rRNA. This chain is Large ribosomal subunit protein bL31, found in Clostridium botulinum (strain ATCC 19397 / Type A).